The sequence spans 265 residues: Methylthioribulose-1-phosphate dehydratase (265 aa).

C116 is a substrate binding site. Zn(2+) is bound by residues H134 and H136. The active-site Proton donor/acceptor is E159. Zn(2+) is bound at residue H224.

Belongs to the aldolase class II family. MtnB subfamily. It depends on Zn(2+) as a cofactor.

Its subcellular location is the cytoplasm. It carries out the reaction 5-(methylsulfanyl)-D-ribulose 1-phosphate = 5-methylsulfanyl-2,3-dioxopentyl phosphate + H2O. It functions in the pathway amino-acid biosynthesis; L-methionine biosynthesis via salvage pathway; L-methionine from S-methyl-5-thio-alpha-D-ribose 1-phosphate: step 2/6. Functionally, catalyzes the dehydration of methylthioribulose-1-phosphate (MTRu-1-P) into 2,3-diketo-5-methylthiopentyl-1-phosphate (DK-MTP-1-P). In Debaryomyces hansenii (strain ATCC 36239 / CBS 767 / BCRC 21394 / JCM 1990 / NBRC 0083 / IGC 2968) (Yeast), this protein is Methylthioribulose-1-phosphate dehydratase.